We begin with the raw amino-acid sequence, 384 residues long: 4-coumarate--CoA ligase (384 aa).

It belongs to the ATP-dependent AMP-binding enzyme family.

It carries out the reaction (E)-4-coumarate + ATP + CoA = (E)-4-coumaroyl-CoA + AMP + diphosphate. Converts p-coumaric acid into p-coumaryl CoA. This is necessary for the activation of the photoactive yellow protein (PYP) chromophore. This Rhodobacter capsulatus (strain ATCC BAA-309 / NBRC 16581 / SB1003) protein is 4-coumarate--CoA ligase (pcl).